The sequence spans 466 residues: Chromosomal replication initiator protein DnaA (466 aa).

Positions 1 to 77 are domain I, interacts with DnaA modulators; it reads MSQEIWADVL…GAEHPQVEFQ (77 aa). The interval 77–121 is domain II; that stretch reads QVLPAAQDALLLPNDPPPAPEAAAPTPKTKAAPTPPPSTPGDNRK. The tract at residues 87-122 is disordered; it reads LLPNDPPPAPEAAAPTPKTKAAPTPPPSTPGDNRKT. Low complexity predominate over residues 97 to 108; it reads EAAAPTPKTKAA. Positions 122–338 are domain III, AAA+ region; sequence TLNPKYTFEN…GALMRVVAFA (217 aa). The ATP site is built by Gly-166, Gly-168, Lys-169, and Thr-170. A domain IV, binds dsDNA region spans residues 339–466; the sequence is SLNNVPFSRA…GKEEEEEVGA (128 aa).

The protein belongs to the DnaA family. In terms of assembly, oligomerizes as a right-handed, spiral filament on DNA at oriC.

It localises to the cytoplasm. In terms of biological role, plays an essential role in the initiation and regulation of chromosomal replication. ATP-DnaA binds to the origin of replication (oriC) to initiate formation of the DNA replication initiation complex once per cell cycle. Binds the DnaA box (a 9 base pair repeat at the origin) and separates the double-stranded (ds)DNA. Forms a right-handed helical filament on oriC DNA; dsDNA binds to the exterior of the filament while single-stranded (ss)DNA is stabiized in the filament's interior. The ATP-DnaA-oriC complex binds and stabilizes one strand of the AT-rich DNA unwinding element (DUE), permitting loading of DNA polymerase. After initiation quickly degrades to an ADP-DnaA complex that is not apt for DNA replication. Binds acidic phospholipids. Its function is as follows. Strand separation requires the DnaA boxes and adjacent DnaA-trio motifs but works equally well with ADP or ATP. The chain is Chromosomal replication initiator protein DnaA from Deinococcus radiodurans (strain ATCC 13939 / DSM 20539 / JCM 16871 / CCUG 27074 / LMG 4051 / NBRC 15346 / NCIMB 9279 / VKM B-1422 / R1).